The chain runs to 192 residues: MAKLYFYYSTMNAGKSTTLLQSSYNYQERDMNTLVYTAAIDDRFGVGKVTSRIGISQEAQLFHKESDLFVEIAQHLQQQPLHCILVDEAQFLTKTQVYQLSEVVDKLKIPVLCYGLRTDFQAELFEGSKYLLAWADQLEELKTICYCGRKANFVLRLNDKGEVVRDGAQIQIGGNDSYLSVCRLHYKEKIAL.

ATP contacts are provided by residues 9–16 (STMNAGKS) and 87–90 (DEAQ). Glu-88 functions as the Proton acceptor in the catalytic mechanism. Zn(2+) is bound by residues Cys-145, Cys-147, Cys-182, and His-185.

The protein belongs to the thymidine kinase family. Homotetramer.

It localises to the cytoplasm. It catalyses the reaction thymidine + ATP = dTMP + ADP + H(+). In Pasteurella multocida (strain Pm70), this protein is Thymidine kinase.